The chain runs to 79 residues: Acyl carrier protein (79 aa).

A Carrier domain is found at serine 2–leucine 77. Serine 37 is modified (O-(pantetheine 4'-phosphoryl)serine).

Belongs to the acyl carrier protein (ACP) family. Post-translationally, 4'-phosphopantetheine is transferred from CoA to a specific serine of apo-ACP by AcpS. This modification is essential for activity because fatty acids are bound in thioester linkage to the sulfhydryl of the prosthetic group.

It is found in the cytoplasm. It participates in lipid metabolism; fatty acid biosynthesis. Carrier of the growing fatty acid chain in fatty acid biosynthesis. The polypeptide is Acyl carrier protein (Phenylobacterium zucineum (strain HLK1)).